The following is a 694-amino-acid chain: MQNSDSGSDSATSVALRTSASAQAPVVQPVPASQQVQTVQHVYPAQVQYVEGDTVYTNGAIRTAYSYNAEAQIYAPSSGSSYFDSQGGGAQVTTVVSSPTAIPSHSMVGIAMDVSGSQIISSSGAYLIHGGLENSRHTPSHTSRTFPATLEMAIENLQKNEGITSHKSSLLNSHLQWLLDNYETAEGVSLPRSSLYNHYLRHCQDHKLDPVNAASFGKLIRSVFMGLRTRRLGTRGNSKYHYYGIRLKPDSPLNRLQEDTQYMAIRQQPIHQKQRYRPAQKMDGMGENTANSSQHTSPEQSVAAQSQHHQQFIDTAHVFPDFPEPDLGNVLLPEGITMTDIKNLQLMYRRHCEATIDVVMNLQFQYIEKLWQAFWNSKPSSPDGSNPMNSEDEQEPIIPKDKLMVLCKYEPIMRWMRNCDHILYQALVEILIPDVLRPVPSTLTQAIRNFAKSLEGWLTNAMCDFPQQIVHAKVGVVSAFAQTLRRYTSLNHLAQAARAVLQNTSQINQMLSDLNRVDFANVQEQASWVCQCEEGMVQKLEQDFKLTLQQQSSLDQWANWLDNVVTQVLKPHEGSPSFPKAARQFLLKWSFYSSMVIRDLTLRSAASFGSFHLIRLLYDEYMFYLVEHRVAQATGETPIAVMGEFSDFASMSPVLMDKDDVSELGSDNDGDPRISGQPPVKRERVDLNHSMQEM.

Positions 174-249 (HLQWLLDNYE…YHYYGIRLKP (76 aa)) form a DNA-binding region, RFX-type winged-helix. Disordered regions lie at residues 268 to 309 (QPIH…SQHH) and 659 to 694 (DDVS…MQEM). Positions 288–299 (NTANSSQHTSPE) are enriched in polar residues. Positions 300-309 (QSVAAQSQHH) are enriched in low complexity.

This sequence belongs to the RFX family. As to quaternary structure, homodimer. Heterodimer; heterodimerizes with other rfx proteins.

It is found in the nucleus. The protein localises to the cytoplasm. Functionally, transcription factor that acts as a key regulator of ciliogenesis. Specifically regulates expression of genes required for cilium assembly and function. Recognizes and binds the X-box, a regulatory motif with DNA sequence 5'-GTNRCC(0-3N)RGYAAC-3' present on promoters. Required for neural tube closure and neural ciliogenesis. The protein is DNA-binding protein RFX2 (rfx2) of Xenopus tropicalis (Western clawed frog).